Consider the following 121-residue polypeptide: Phospholipase A2 homolog ECO_00035 (121 aa).

7 cysteine pairs are disulfide-bonded: C25–C114, C27–C43, C42–C94, C48–C121, C49–C87, C56–C80, and C74–C85. An important for membrane-damaging activities in eukaryotes and bacteria; heparin-binding region spans residues 104 to 116 (KKYKIYPNILCRG).

The protein belongs to the phospholipase A2 family. Group II subfamily. S49 sub-subfamily. Monomer. As to expression, expressed by the venom gland.

The protein resides in the secreted. Functionally, snake venom phospholipase A2 homolog that lacks enzymatic activity. Shows high myotoxin activities and displays edema-inducing activities. Has cytotoxic activities against HUVEC cells (LC(50)=4.9 uL) and human lung adenocarcinoma A549 cells (LC(50)=3.5 uL). The sequence is that of Phospholipase A2 homolog ECO_00035 from Echis coloratus (Carpet viper).